The chain runs to 69 residues: SRRCPGKNAWPELVGKSGNMAAATVERENRNVHAIVLKEGSAMTKDFRCDRVWVIVNDHGVVTSVPHIT.

Ser-1 bears the N-acetylserine mark. Cys-4 and Cys-49 form a disulfide bridge.

Functionally, in vitro, strong inhibitor of bovine beta-trypsin, weak inhibitor of alpha-chymotrypsin, subtilisin BPN', subtilisin Carlsberg and cathepsin G. The polypeptide is Proteinase inhibitor (Linum usitatissimum (Flax)).